The primary structure comprises 608 residues: DNA mismatch repair protein MutL (608 aa).

This sequence belongs to the DNA mismatch repair MutL/HexB family.

Functionally, this protein is involved in the repair of mismatches in DNA. It is required for dam-dependent methyl-directed DNA mismatch repair. May act as a 'molecular matchmaker', a protein that promotes the formation of a stable complex between two or more DNA-binding proteins in an ATP-dependent manner without itself being part of a final effector complex. This is DNA mismatch repair protein MutL from Anaeromyxobacter dehalogenans (strain 2CP-C).